Reading from the N-terminus, the 320-residue chain is Olfactory receptor 52N1 (320 aa).

Residues 1–27 (MSFLNGTSLTPASFILNGIPGLEDVHL) lie on the Extracellular side of the membrane. Residue Asn5 is glycosylated (N-linked (GlcNAc...) asparagine). A helical transmembrane segment spans residues 28–48 (WISFPLCTMYSIAITGNFGLM). Over 49–56 (YLIYCDEA) the chain is Cytoplasmic. The helical transmembrane segment at 57–77 (LHRPMYVFLALLSFTDVLMCT) threads the bilayer. Residues 78–101 (STLPNTLFILWFNLKEIDFKACLA) are Extracellular-facing. An intrachain disulfide couples Cys99 to Cys191. The chain crosses the membrane as a helical span at residues 102-122 (QMFFVHTFTGMESGVLMLMAL). Over 123-141 (DHCVAICFPLRYATILTNS) the chain is Cytoplasmic. Residues 142–162 (VIAKAGFLTFLRGVMLVIPST) form a helical membrane-spanning segment. The Extracellular portion of the chain corresponds to 163–198 (FLTKRLPYCKGNVIPHTYCDHMSVAKISCGNVRVNA). Residues 199–219 (IYGLIVALLIGGFDILCITIS) traverse the membrane as a helical segment. Residues 220–239 (YTMILQAVVSLSSADARQKA) are Cytoplasmic-facing. Residues 240-260 (FSTCTAHFCAIVLTYVPAFFT) form a helical membrane-spanning segment. Residues 261–276 (FFTHHFGGHTIPLHIH) are Extracellular-facing. Residues 277-297 (IIMANLYLLMPPTMNPIVYGV) form a helical membrane-spanning segment. Topologically, residues 298–320 (KTRQVRESVIRFFLKGKDNSHNF) are cytoplasmic.

The protein belongs to the G-protein coupled receptor 1 family.

It localises to the cell membrane. Its function is as follows. Odorant receptor. The protein is Olfactory receptor 52N1 (OR52N1) of Homo sapiens (Human).